Here is a 248-residue protein sequence, read N- to C-terminus: NADP-dependent 3-hydroxy acid dehydrogenase YdfG (248 aa).

NADP(+)-binding positions include Gly-7 to Phe-12, Arg-32 to Arg-33, Asp-54 to Val-55, and Asn-81. Ser-134 contributes to the substrate binding site. Residues Tyr-147, Lys-151, and Pro-177–Phe-185 contribute to the NADP(+) site. Residue Tyr-147 is the Proton acceptor of the active site.

The protein belongs to the short-chain dehydrogenases/reductases (SDR) family. Homotetramer.

It carries out the reaction 3-hydroxypropanoate + NADP(+) = 3-oxopropanoate + NADPH + H(+). The catalysed reaction is L-allo-threonine + NADP(+) = aminoacetone + CO2 + NADPH. In terms of biological role, NADP-dependent dehydrogenase with broad substrate specificity acting on 3-hydroxy acids. Catalyzes the NADP-dependent oxidation of L-allo-threonine to L-2-amino-3-keto-butyrate, which is spontaneously decarboxylated into aminoacetone. Also acts on D-threonine, L-serine, D-serine, D-3-hydroxyisobutyrate, L-3-hydroxyisobutyrate, D-glycerate and L-glycerate. Able to catalyze the reduction of the malonic semialdehyde to 3-hydroxypropionic acid. YdfG is apparently supplementing RutE, the presumed malonic semialdehyde reductase involved in pyrimidine degradation since both are able to detoxify malonic semialdehyde. This chain is NADP-dependent 3-hydroxy acid dehydrogenase YdfG, found in Escherichia coli (strain K12).